The chain runs to 190 residues: Small ribosomal subunit protein uS4c (190 aa).

Residues 92 to 152 (RLDHVVYRAG…KSPSSAQLPP (61 aa)) enclose the S4 RNA-binding domain.

The protein belongs to the universal ribosomal protein uS4 family. Part of the 30S ribosomal subunit. Contacts protein S5. The interaction surface between S4 and S5 is involved in control of translational fidelity.

It localises to the plastid. The protein resides in the chloroplast. One of the primary rRNA binding proteins, it binds directly to 16S rRNA where it nucleates assembly of the body of the 30S subunit. Its function is as follows. With S5 and S12 plays an important role in translational accuracy. This chain is Small ribosomal subunit protein uS4c (rps4), found in Cyanidioschyzon merolae (strain NIES-3377 / 10D) (Unicellular red alga).